Consider the following 1620-residue polypeptide: ABC-type organic anion transporter ABCA8A (1620 aa).

The next 7 membrane-spanning stretches (helical) occupy residues 30–50, 224–244, 263–283, 294–314, 328–348, 357–377, and 397–417; these read TFLE…FLQL, CFLF…SAGV, SAFW…VTLL, VFLT…LSLI, FLTD…GFTA, LEWL…VQLL, and IGTI…TFYF. 2 N-linked (GlcNAc...) asparagine glycosylation sites follow: Asn454 and Asn482. In terms of domain architecture, ABC transporter 1 spans 478-713; the sequence is IRIRNLTKDY…WGIGYHLSLQ (236 aa). Residue 514–521 coordinates ATP; that stretch reads GHSGAGKS. The chain crosses the membrane as a helical span at residues 861–881; the sequence is IVILILVLGIGLLHILSANIY. Asn967 carries N-linked (GlcNAc...) asparagine glycosylation. 7 consecutive transmembrane segments (helical) span residues 979–999, 1019–1039, 1068–1088, 1105–1125, 1133–1153, 1159–1179, and 1196–1216; these read CFPV…APSA, YLAY…YISM, ALFE…AFYA, ILYV…ISFI, SGLW…FMLI, ISLF…CTLL, and EYSY…VVIL. Positions 1284-1517 constitute an ABC transporter 2 domain; sequence LRKEYKGKKK…FGKEYLLEMK (234 aa). 1322–1329 provides a ligand contact to ATP; it reads GHNGAGKS.

Belongs to the ABC transporter superfamily. ABCA family. In terms of tissue distribution, expressed in lung, heart, liver, skeletal muscle and testis. Highly expressed in the liver, and is also abundant in heart and skeletal muscle. Highly expressed in heart.

Its subcellular location is the cell membrane. It localises to the basolateral cell membrane. It catalyses the reaction taurocholate(in) + ATP + H2O = taurocholate(out) + ADP + phosphate + H(+). The enzyme catalyses cholesterol(in) + ATP + H2O = cholesterol(out) + ADP + phosphate + H(+). Its activity is regulated as follows. Cholesterol efflux is increased by extracellularly applied taurocholate. Its function is as follows. Mediates cholesterol and taurocholate efflux. Through the interaction with ABCA1 potentiates the cholesterol efflux to lipid-free APOA1, in turn regulates high-density lipoprotein cholesterol levels. The chain is ABC-type organic anion transporter ABCA8A from Mus musculus (Mouse).